The primary structure comprises 179 residues: Large ribosomal subunit protein uL5 (179 aa).

The protein belongs to the universal ribosomal protein uL5 family. As to quaternary structure, part of the 50S ribosomal subunit; part of the 5S rRNA/L5/L18/L25 subcomplex. Contacts the 5S rRNA and the P site tRNA. Forms a bridge to the 30S subunit in the 70S ribosome.

Its function is as follows. This is one of the proteins that bind and probably mediate the attachment of the 5S RNA into the large ribosomal subunit, where it forms part of the central protuberance. In the 70S ribosome it contacts protein S13 of the 30S subunit (bridge B1b), connecting the 2 subunits; this bridge is implicated in subunit movement. Contacts the P site tRNA; the 5S rRNA and some of its associated proteins might help stabilize positioning of ribosome-bound tRNAs. The protein is Large ribosomal subunit protein uL5 of Clostridium perfringens (strain ATCC 13124 / DSM 756 / JCM 1290 / NCIMB 6125 / NCTC 8237 / Type A).